The primary structure comprises 213 residues: Glycerol-3-phosphate acyltransferase (213 aa).

The next 6 membrane-spanning stretches (helical) occupy residues 2–22, 54–74, 80–100, 110–130, 143–163, and 165–185; these read ITIV…GLWI, MATF…PIMF, SPLI…FAGF, AGVV…VFFG, VTAS…GFIL, and NYDP…IIRH.

It belongs to the PlsY family. Probably interacts with PlsX.

Its subcellular location is the cell membrane. It catalyses the reaction an acyl phosphate + sn-glycerol 3-phosphate = a 1-acyl-sn-glycero-3-phosphate + phosphate. It functions in the pathway lipid metabolism; phospholipid metabolism. In terms of biological role, catalyzes the transfer of an acyl group from acyl-phosphate (acyl-PO(4)) to glycerol-3-phosphate (G3P) to form lysophosphatidic acid (LPA). This enzyme utilizes acyl-phosphate as fatty acyl donor, but not acyl-CoA or acyl-ACP. The chain is Glycerol-3-phosphate acyltransferase from Streptococcus pneumoniae (strain Taiwan19F-14).